A 172-amino-acid chain; its full sequence is MLDAFTKVVSQADTRGAYISDAEIDALKTMVAAGSKRMDVVNRITGNASTIVANAARALFEEQPQLIAPGGNAYTNRRMAACLRDMEIILRYVTYAVFAGDASVLDDRCLNGLRETYQALGVPGASVSTGVQKMKEAAIAIANDPSGVTRGDCSSLMSELGSYFDRAAAAVG.

Asn72 is subject to N4-methylasparagine. (2R,3E)-phycocyanobilin-binding residues include Cys82 and Cys153.

This sequence belongs to the phycobiliprotein family. In terms of assembly, heterodimer of an alpha and a beta subunit, which further assembles into trimers and the trimers into hexamers. In terms of processing, contains two covalently linked bilin chromophores.

The protein localises to the cellular thylakoid membrane. Its function is as follows. Light-harvesting photosynthetic bile pigment-protein from the phycobiliprotein complex (phycobilisome, PBS). Phycocyanin is the major phycobiliprotein in the PBS rod. The protein is C-phycocyanin-2 beta subunit (cpcB2) of Microchaete diplosiphon (Fremyella diplosiphon).